Reading from the N-terminus, the 244-residue chain is Tyrosine recombinase XerD-like (244 aa).

Positions 1-73 (MRDRISAFLE…ACNQFLYFLY (73 aa)) constitute a Core-binding (CB) domain. The Tyr recombinase domain occupies 90–244 (AEKKTEKPEI…KTVLTLEKYR (155 aa)). Residues K150 and R211 contribute to the active site. Residue Y243 is the O-(3'-phospho-DNA)-tyrosine intermediate of the active site.

The protein belongs to the 'phage' integrase family. XerD-like subfamily.

It is found in the cytoplasm. Putative tyrosine recombinase. Not involved in the cutting and rejoining of the recombining DNA molecules on dif(SL) site. The polypeptide is Tyrosine recombinase XerD-like (Streptococcus pneumoniae serotype 2 (strain D39 / NCTC 7466)).